A 227-amino-acid polypeptide reads, in one-letter code: uncharacterized protein (227 aa).

The 114-residue stretch at 2-115 (KILMIEDNVS…TLVARIKAVI (114 aa)) folds into the Response regulatory domain. Asp51 is modified (4-aspartylphosphate). A DNA-binding region (ompR/PhoB-type) is located at residues 128-226 (EDMIETECFT…VWGVGYKFDE (99 aa)).

Phosphorylated by YclK.

It localises to the cytoplasm. Its function is as follows. Could be member of the two-component regulatory system YclK/YclJ. This is an uncharacterized protein from Bacillus subtilis (strain 168).